Reading from the N-terminus, the 156-residue chain is Endoribonuclease YbeY (156 aa).

3 residues coordinate Zn(2+): His-114, His-118, and His-124.

It belongs to the endoribonuclease YbeY family. Zn(2+) is required as a cofactor.

Its subcellular location is the cytoplasm. Functionally, single strand-specific metallo-endoribonuclease involved in late-stage 70S ribosome quality control and in maturation of the 3' terminus of the 16S rRNA. This Sodalis glossinidius (strain morsitans) protein is Endoribonuclease YbeY.